We begin with the raw amino-acid sequence, 159 residues long: NADH-quinone oxidoreductase subunit B (159 aa).

Cysteine 36, cysteine 37, cysteine 102, and cysteine 132 together coordinate [4Fe-4S] cluster.

Belongs to the complex I 20 kDa subunit family. NDH-1 is composed of 14 different subunits. Subunits NuoB, C, D, E, F, and G constitute the peripheral sector of the complex. [4Fe-4S] cluster serves as cofactor.

The protein resides in the cell inner membrane. It carries out the reaction a quinone + NADH + 5 H(+)(in) = a quinol + NAD(+) + 4 H(+)(out). Its function is as follows. NDH-1 shuttles electrons from NADH, via FMN and iron-sulfur (Fe-S) centers, to quinones in the respiratory chain. The immediate electron acceptor for the enzyme in this species is believed to be ubiquinone. Couples the redox reaction to proton translocation (for every two electrons transferred, four hydrogen ions are translocated across the cytoplasmic membrane), and thus conserves the redox energy in a proton gradient. In Acidovorax ebreus (strain TPSY) (Diaphorobacter sp. (strain TPSY)), this protein is NADH-quinone oxidoreductase subunit B.